A 625-amino-acid polypeptide reads, in one-letter code: Enolase 4 (625 aa).

The disordered stretch occupies residues 184 to 226; sequence YSTVPTPLPPVPPPPPPPPPTKKKGQKPGRKDTITEKPIAPAE. The segment covering 189–203 has biased composition (pro residues); that stretch reads TPLPPVPPPPPPPPP. V300 serves as a coordination point for substrate. Positions 331–350 are disordered; sequence PSPPKAETKKGHDGSKRGQQ. Residues 336–346 show a composition bias toward basic and acidic residues; the sequence is AETKKGHDGSK. The Proton acceptor role is filled by N497. G548 contacts substrate. The segment at 604-625 is disordered; that stretch reads PLVPTFPTQGVEESAETGASSG.

It belongs to the enolase family. Interacts with ENO1 and AKAP4. Synthesized as an approximately 70-kDa precursor, which then undergoes proteolytic cleavage to an approximately 60-kDa enzyme; HOATZ associates directly or indirectly with ENO4 to mediate this process before its transport to mature flagella.

It carries out the reaction (2R)-2-phosphoglycerate = phosphoenolpyruvate + H2O. It participates in carbohydrate degradation; glycolysis; pyruvate from D-glyceraldehyde 3-phosphate: step 4/5. Functionally, may be required for sperm motility and function. This Homo sapiens (Human) protein is Enolase 4.